The chain runs to 807 residues: 1-phosphatidylinositol 4,5-bisphosphate phosphodiesterase delta-4 (807 aa).

The PH domain occupies 16–124; the sequence is LLMQEGTMMR…WMRGLQLLVD (109 aa). The segment at 26–53 is substrate binding; it reads KVRTKSWKKLRYFRLQNDGMTVWHGSQP. EF-hand domains follow at residues 134-169, 170-205, and 203-237; these read QMDQ…MNVE, MDEE…LTKR, and TKRT…EQKE. Ca(2+) contacts are provided by Asp-147, Asn-149, Asp-151, Arg-153, Glu-158, Asp-183, Ser-187, Asp-189, and Glu-194. The GBA signature appears at 213-243; that stretch reads EDFSSDKQKLTLLEFVDFLRKEQKEKDHAPD. The PI-PLC X-box domain maps to 290–435; sequence QDMTQPLSHY…LRGKILVKGK (146 aa). His-305 is a catalytic residue. Asn-306, Glu-335, and Asp-337 together coordinate Ca(2+). The active site involves His-350. Glu-384 contributes to the Ca(2+) binding site. Positions 433 and 435 each coordinate substrate. The interval 442 to 490 is disordered; it reads VDKEEEEEEEEEELEKDEGPDLDPASPELDTQPQPETQGQAAGNKKERK. The span at 443–462 shows a compositional bias: acidic residues; sequence DKEEEEEEEEEELEKDEGPD. Positions 470-482 are enriched in polar residues; it reads LDTQPQPETQGQA. Residues 538 to 654 enclose the PI-PLC Y-box domain; the sequence is LSALVVYLRT…GYVLKPEFLR (117 aa). The substrate site is built by Ser-567 and Arg-594. The C2 domain maps to 654-781; the sequence is RDTQSSFNPE…QGYRHVSLLS (128 aa). The Ca(2+) site is built by Asp-697, Asn-721, Asp-750, and Tyr-751. The short motif at 776-779 is the PDZ-binding element; it reads HVSL.

Interacts with GRIP1. Interacts (via GBA motif) with guanine nucleotide-binding protein G(i) alpha subunit GNAI3 (inactive GDP-bound form)l low-affinity interaction. Ca(2+) is required as a cofactor.

It is found in the membrane. Its subcellular location is the nucleus. The protein resides in the cytoplasm. The protein localises to the endoplasmic reticulum. The enzyme catalyses a 1,2-diacyl-sn-glycero-3-phospho-(1D-myo-inositol-4,5-bisphosphate) + H2O = 1D-myo-inositol 1,4,5-trisphosphate + a 1,2-diacyl-sn-glycerol + H(+). It catalyses the reaction a 1,2-diacyl-sn-glycero-3-phospho-(1D-myo-inositol) + H2O = 1D-myo-inositol 1-phosphate + a 1,2-diacyl-sn-glycerol + H(+). In terms of biological role, hydrolyzes the phosphatidylinositol 4,5-bisphosphate (PIP2) to generate 2 second messenger molecules diacylglycerol (DAG) and inositol 1,4,5-trisphosphate (IP3). DAG mediates the activation of protein kinase C (PKC), while IP3 releases Ca(2+) from intracellular stores. Required for acrosome reaction in sperm during fertilization, probably by acting as an important enzyme for intracellular Ca(2+) mobilization in the zona pellucida-induced acrosome reaction. May play a role in cell growth. Modulates the liver regeneration in cooperation with nuclear PKC. Overexpression up-regulates the Erk signaling pathway and proliferation. This is 1-phosphatidylinositol 4,5-bisphosphate phosphodiesterase delta-4 from Mus musculus (Mouse).